A 556-amino-acid polypeptide reads, in one-letter code: Formate--tetrahydrofolate ligase (556 aa).

T65 to T72 contacts ATP.

It belongs to the formate--tetrahydrofolate ligase family.

It catalyses the reaction (6S)-5,6,7,8-tetrahydrofolate + formate + ATP = (6R)-10-formyltetrahydrofolate + ADP + phosphate. The protein operates within one-carbon metabolism; tetrahydrofolate interconversion. The sequence is that of Formate--tetrahydrofolate ligase from Kosmotoga olearia (strain ATCC BAA-1733 / DSM 21960 / TBF 19.5.1).